Consider the following 285-residue polypeptide: Ribonuclease H1 (285 aa).

Residues 72-122 form a disordered region; it reads RSSSSPDGSKGQESAHVQKLQVKTSKRPREPLGEEEEPPEPGAKHTRQDTE. The region spanning 135-281 is the RNase H type-1 domain; that stretch reads MGESVVVYTD…ADRLAREGAK (147 aa). Mg(2+) contacts are provided by aspartate 144, glutamate 185, aspartate 209, and aspartate 273.

Belongs to the RNase H family. As to quaternary structure, monomer. The cofactor is Mg(2+).

It is found in the cytoplasm. The enzyme catalyses Endonucleolytic cleavage to 5'-phosphomonoester.. With respect to regulation, in the presence of magnesium, manganese is inhibitory. Its function is as follows. Endonuclease that specifically degrades the RNA of RNA-DNA hybrids. Plays a role in RNA polymerase II (RNAp II) transcription termination by degrading R-loop RNA-DNA hybrid formation at G-rich pause sites located downstream of the poly(A) site and behind the elongating RNAp II. In Rattus norvegicus (Rat), this protein is Ribonuclease H1 (Rnaseh1).